The chain runs to 283 residues: Formamidopyrimidine-DNA glycosylase (283 aa).

P2 (schiff-base intermediate with DNA) is an active-site residue. Residue E3 is the Proton donor of the active site. Catalysis depends on K60, which acts as the Proton donor; for beta-elimination activity. Positions 100, 119, and 164 each coordinate DNA. The FPG-type zinc finger occupies W249–K283. Residue R273 is the Proton donor; for delta-elimination activity of the active site.

It belongs to the FPG family. Monomer. The cofactor is Zn(2+).

It carries out the reaction Hydrolysis of DNA containing ring-opened 7-methylguanine residues, releasing 2,6-diamino-4-hydroxy-5-(N-methyl)formamidopyrimidine.. The enzyme catalyses 2'-deoxyribonucleotide-(2'-deoxyribose 5'-phosphate)-2'-deoxyribonucleotide-DNA = a 3'-end 2'-deoxyribonucleotide-(2,3-dehydro-2,3-deoxyribose 5'-phosphate)-DNA + a 5'-end 5'-phospho-2'-deoxyribonucleoside-DNA + H(+). Functionally, involved in base excision repair of DNA damaged by oxidation or by mutagenic agents. Acts as a DNA glycosylase that recognizes and removes damaged bases. Has a preference for oxidized purines, such as 7,8-dihydro-8-oxoguanine (8-oxoG). Has AP (apurinic/apyrimidinic) lyase activity and introduces nicks in the DNA strand. Cleaves the DNA backbone by beta-delta elimination to generate a single-strand break at the site of the removed base with both 3'- and 5'-phosphates. The chain is Formamidopyrimidine-DNA glycosylase from Prochlorococcus marinus (strain SARG / CCMP1375 / SS120).